The chain runs to 451 residues: UDP-N-acetylmuramoylalanine--D-glutamate ligase (451 aa).

116–122 (GTNGKTT) lines the ATP pocket.

The protein belongs to the MurCDEF family.

It localises to the cytoplasm. It carries out the reaction UDP-N-acetyl-alpha-D-muramoyl-L-alanine + D-glutamate + ATP = UDP-N-acetyl-alpha-D-muramoyl-L-alanyl-D-glutamate + ADP + phosphate + H(+). It functions in the pathway cell wall biogenesis; peptidoglycan biosynthesis. Cell wall formation. Catalyzes the addition of glutamate to the nucleotide precursor UDP-N-acetylmuramoyl-L-alanine (UMA). The chain is UDP-N-acetylmuramoylalanine--D-glutamate ligase from Clostridioides difficile (strain 630) (Peptoclostridium difficile).